The following is a 710-amino-acid chain: Lactoperoxidase (710 aa).

The signal sequence occupies residues 1–23; the sequence is MKVLLHLPALLASLTLLQTAASA. Residues 24-80 constitute a propeptide that is removed on maturation; the sequence is SDDPTAETDIIHDTVEEVKVWVNKAFLDSRDRLKMAMTTKIHSTRHLSDYLKHAKGR. An intrachain disulfide couples C130 to C143. Position 223 (D223) interacts with heme b. H224 serves as the catalytic Proton acceptor. D225 lines the Ca(2+) pocket. 2 disulfide bridges follow: C244–C254 and C248–C272. Ca(2+) is bound by residues T299, F301, D303, and S305. Position 313 is a phosphoserine (S313). C352 and C363 are joined by a disulfide. Residues E373 and H466 each contribute to the heme b site. 3'-nitrotyrosine is present on Y480. 2 disulfides stabilise this stretch: C571-C628 and C669-C694.

It belongs to the peroxidase family. It depends on Ca(2+) as a cofactor. Heme b is required as a cofactor. As to expression, expressed in the colon, including colonocytes and mucin-containing goblet cells. Not detected in the ileum.

Its subcellular location is the secreted. The protein resides in the cytoplasm. It carries out the reaction 2 a phenolic donor + H2O2 = 2 a phenolic radical donor + 2 H2O. The catalysed reaction is thiocyanate + H2O2 + H(+) = hypothiocyanous acid + H2O. The enzyme catalyses iodide + H2O2 = hypoiodite + H2O. Heme-containing oxidoreductase which catalyzes the conversion of thiocyanate (SCN(-)) into antimicrobial agent hypothiocyanous acid (OSCN(-)) in the presence of hydrogen peroxide (H2O2). Also involved in the conversion of iodide (I(-)) into hypoiodite (IO(-)) in the presence of H2O2. Responsible for the inactivation of a wide range of micro-organisms and hence, important component of defense mechanism. May be implicated in airway host defense against infection. May contribute to maintaining an appropriate H2O2 cellular level, therefore protecting cells from H2O2-caused injuries and inflammation. The protein is Lactoperoxidase of Mus musculus (Mouse).